Here is a 305-residue protein sequence, read N- to C-terminus: NAD kinase 2 (305 aa).

Asp-78 serves as the catalytic Proton acceptor. NAD(+) contacts are provided by residues 78 to 79, 152 to 153, Asp-182, 193 to 198, and Asn-251; these read DG, NE, and TAYSLS.

The protein belongs to the NAD kinase family. A divalent metal cation is required as a cofactor.

It localises to the cytoplasm. The enzyme catalyses NAD(+) + ATP = ADP + NADP(+) + H(+). Involved in the regulation of the intracellular balance of NAD and NADP, and is a key enzyme in the biosynthesis of NADP. Catalyzes specifically the phosphorylation on 2'-hydroxyl of the adenosine moiety of NAD to yield NADP. Functions as a growth repressor under light-activated heterotrophic growth conditions and light and dark cycle conditions in the presence of glucose. NADP(H)/NAD(H) maintenance by slr0400 probably plays a significant role in modulating glycolysis and the TCA cycle to repress the growth rate and maintain the photosynthetic capacity. This Synechocystis sp. (strain ATCC 27184 / PCC 6803 / Kazusa) protein is NAD kinase 2.